Here is a 427-residue protein sequence, read N- to C-terminus: Enolase (427 aa).

Q162 is a (2R)-2-phosphoglycerate binding site. Residue E204 is the Proton donor of the active site. Residues D241, E283, and D310 each coordinate Mg(2+). Residues K335, R364, S365, and K386 each coordinate (2R)-2-phosphoglycerate. Residue K335 is the Proton acceptor of the active site.

It belongs to the enolase family. Mg(2+) serves as cofactor.

The protein resides in the cytoplasm. Its subcellular location is the secreted. It is found in the cell surface. It carries out the reaction (2R)-2-phosphoglycerate = phosphoenolpyruvate + H2O. It functions in the pathway carbohydrate degradation; glycolysis; pyruvate from D-glyceraldehyde 3-phosphate: step 4/5. Its function is as follows. Catalyzes the reversible conversion of 2-phosphoglycerate (2-PG) into phosphoenolpyruvate (PEP). It is essential for the degradation of carbohydrates via glycolysis. The sequence is that of Enolase from Mycolicibacterium smegmatis (strain ATCC 700084 / mc(2)155) (Mycobacterium smegmatis).